The primary structure comprises 146 residues: Large ribosomal subunit protein bL9 (146 aa).

The protein belongs to the bacterial ribosomal protein bL9 family.

In terms of biological role, binds to the 23S rRNA. This chain is Large ribosomal subunit protein bL9, found in Flavobacterium johnsoniae (strain ATCC 17061 / DSM 2064 / JCM 8514 / BCRC 14874 / CCUG 350202 / NBRC 14942 / NCIMB 11054 / UW101) (Cytophaga johnsonae).